The primary structure comprises 449 residues: Glucose-6-phosphate isomerase (449 aa).

The Proton donor role is filled by Glu291. Residues His312 and Lys426 contribute to the active site.

Belongs to the GPI family.

It localises to the cytoplasm. It catalyses the reaction alpha-D-glucose 6-phosphate = beta-D-fructose 6-phosphate. The protein operates within carbohydrate biosynthesis; gluconeogenesis. It functions in the pathway carbohydrate degradation; glycolysis; D-glyceraldehyde 3-phosphate and glycerone phosphate from D-glucose: step 2/4. In terms of biological role, catalyzes the reversible isomerization of glucose-6-phosphate to fructose-6-phosphate. In Streptococcus pyogenes serotype M6 (strain ATCC BAA-946 / MGAS10394), this protein is Glucose-6-phosphate isomerase.